A 320-amino-acid polypeptide reads, in one-letter code: Ciliary microtubule inner protein 2A (320 aa).

The protein belongs to the CIMIP2 family. Microtubule inner protein component of sperm flagellar doublet microtubules. As to expression, expressed in sperm.

The protein resides in the cytoplasm. The protein localises to the cytoskeleton. It localises to the flagellum axoneme. In terms of biological role, microtubule inner protein (MIP) part of the dynein-decorated doublet microtubules (DMTs) in flagellum axoneme. Binds to the intra-tubulin interfaces. The chain is Ciliary microtubule inner protein 2A (CIMIP2A) from Bos taurus (Bovine).